Consider the following 453-residue polypeptide: MFSRFHALFLLLVLSVRTYKCVSSSSSSSSSFSFSSFSSSSSSQTLVLPLKTRITPTDHRPTDKLHFHHNVTLTVTLTVGTPPQNISMVIDTGSELSWLRCNRSSNPNPVNNFDPTRSSSYSPIPCSSPTCRTRTRDFLIPASCDSDKLCHATLSYADASSSEGNLAAEIFHFGNSTNDSNLIFGCMGSVSGSDPEEDTKTTGLLGMNRGSLSFISQMGFPKFSYCISGTDDFPGFLLLGDSNFTWLTPLNYTPLIRISTPLPYFDRVAYTVQLTGIKVNGKLLPIPKSVLVPDHTGAGQTMVDSGTQFTFLLGPVYTALRSHFLNRTNGILTVYEDPDFVFQGTMDLCYRISPVRIRSGILHRLPTVSLVFEGAEIAVSGQPLLYRVPHLTVGNDSVYCFTFGNSDLMGMEAYVIGHHHQQNMWIEFDLQRSRIGLAPVECDVSGQRLGIGS.

A signal peptide spans 1–18 (MFSRFHALFLLLVLSVRT). A propeptide spans 19–57 (YKCVSSSSSSSSSFSFSSFSSSSSSQTLVLPLKTRITPT) (activation peptide). N-linked (GlcNAc...) asparagine glycosylation is found at asparagine 70 and asparagine 85. The 366-residue stretch at 73–438 (LTVTLTVGTP…DLQRSRIGLA (366 aa)) folds into the Peptidase A1 domain. The active site involves aspartate 91. N-linked (GlcNAc...) asparagine glycosylation is found at asparagine 102, asparagine 175, asparagine 178, and asparagine 243. The active site involves aspartate 304. 2 N-linked (GlcNAc...) asparagine glycosylation sites follow: asparagine 326 and asparagine 395.

The protein belongs to the peptidase A1 family. In terms of tissue distribution, expressed specifically in developing gametophytes and developing seeds.

It is found in the endoplasmic reticulum. Functionally, embryo-specific aspartic protease that limits programmed cell death during reproductive development. Possesses peptidase activity toward casein in vitro. This Arabidopsis thaliana (Mouse-ear cress) protein is Aspartic proteinase PCS1 (PCS1).